Here is a 361-residue protein sequence, read N- to C-terminus: Uroporphyrinogen decarboxylase (361 aa).

Residues 27-31 (RQAGR), Asp77, Tyr154, Thr209, and His327 each bind substrate.

This sequence belongs to the uroporphyrinogen decarboxylase family. In terms of assembly, homodimer.

The protein localises to the cytoplasm. It carries out the reaction uroporphyrinogen III + 4 H(+) = coproporphyrinogen III + 4 CO2. Its pathway is porphyrin-containing compound metabolism; protoporphyrin-IX biosynthesis; coproporphyrinogen-III from 5-aminolevulinate: step 4/4. Catalyzes the decarboxylation of four acetate groups of uroporphyrinogen-III to yield coproporphyrinogen-III. The protein is Uroporphyrinogen decarboxylase of Coxiella burnetii (strain RSA 331 / Henzerling II).